The primary structure comprises 353 residues: 3-dehydroquinate synthase (353 aa).

NAD(+) is bound by residues 60-65 (AGDMNK), 94-98 (GMITD), 118-119 (TT), Lys131, and Lys140. Residues Glu173, His234, and His253 each contribute to the Zn(2+) site.

Belongs to the sugar phosphate cyclases superfamily. Dehydroquinate synthase family. The cofactor is NAD(+). It depends on Co(2+) as a cofactor. Zn(2+) serves as cofactor.

The protein resides in the cytoplasm. The catalysed reaction is 7-phospho-2-dehydro-3-deoxy-D-arabino-heptonate = 3-dehydroquinate + phosphate. It functions in the pathway metabolic intermediate biosynthesis; chorismate biosynthesis; chorismate from D-erythrose 4-phosphate and phosphoenolpyruvate: step 2/7. In terms of biological role, catalyzes the conversion of 3-deoxy-D-arabino-heptulosonate 7-phosphate (DAHP) to dehydroquinate (DHQ). In Parabacteroides distasonis (strain ATCC 8503 / DSM 20701 / CIP 104284 / JCM 5825 / NCTC 11152), this protein is 3-dehydroquinate synthase.